The chain runs to 315 residues: PIH1 domain-containing protein 2 (315 aa).

It belongs to the PIH1 family.

The protein is PIH1 domain-containing protein 2 (PIH1D2) of Homo sapiens (Human).